Consider the following 327-residue polypeptide: uncharacterized protein (327 aa).

A disordered region spans residues 12 to 31; the sequence is PLGTTKSYHMNTSTVSPPSP. 2 helical membrane-spanning segments follow: residues 183-203 and 292-312; these read VSSPSVEVYIAGCCGGVPVIL and VGVGIGLGMCLGVGIGVGLLM.

Its subcellular location is the membrane. This is an uncharacterized protein from Arabidopsis thaliana (Mouse-ear cress).